A 762-amino-acid polypeptide reads, in one-letter code: Phosphoribosylformylglycinamidine synthase subunit PurL (762 aa).

Residue histidine 58 is part of the active site. ATP is bound by residues tyrosine 61 and arginine 105. Glutamate 107 lines the Mg(2+) pocket. Substrate-binding positions include 108–111 and arginine 130; that span reads SHNH. The active-site Proton acceptor is histidine 109. Aspartate 131 contributes to the Mg(2+) binding site. Glutamine 255 is a binding site for substrate. Residue aspartate 283 coordinates Mg(2+). 327–329 is a substrate binding site; the sequence is ESQ. ATP-binding residues include asparagine 513 and glycine 550. Asparagine 551 is a Mg(2+) binding site. Serine 553 is a binding site for substrate.

This sequence belongs to the FGAMS family. In terms of assembly, monomer. Part of the FGAM synthase complex composed of 1 PurL, 1 PurQ and 2 PurS subunits.

The protein localises to the cytoplasm. The enzyme catalyses N(2)-formyl-N(1)-(5-phospho-beta-D-ribosyl)glycinamide + L-glutamine + ATP + H2O = 2-formamido-N(1)-(5-O-phospho-beta-D-ribosyl)acetamidine + L-glutamate + ADP + phosphate + H(+). It functions in the pathway purine metabolism; IMP biosynthesis via de novo pathway; 5-amino-1-(5-phospho-D-ribosyl)imidazole from N(2)-formyl-N(1)-(5-phospho-D-ribosyl)glycinamide: step 1/2. Part of the phosphoribosylformylglycinamidine synthase complex involved in the purines biosynthetic pathway. Catalyzes the ATP-dependent conversion of formylglycinamide ribonucleotide (FGAR) and glutamine to yield formylglycinamidine ribonucleotide (FGAM) and glutamate. The FGAM synthase complex is composed of three subunits. PurQ produces an ammonia molecule by converting glutamine to glutamate. PurL transfers the ammonia molecule to FGAR to form FGAM in an ATP-dependent manner. PurS interacts with PurQ and PurL and is thought to assist in the transfer of the ammonia molecule from PurQ to PurL. The chain is Phosphoribosylformylglycinamidine synthase subunit PurL from Corynebacterium glutamicum (strain ATCC 13032 / DSM 20300 / JCM 1318 / BCRC 11384 / CCUG 27702 / LMG 3730 / NBRC 12168 / NCIMB 10025 / NRRL B-2784 / 534).